An 83-amino-acid chain; its full sequence is Cell division topological specificity factor (83 aa).

It belongs to the MinE family.

In terms of biological role, prevents the cell division inhibition by proteins MinC and MinD at internal division sites while permitting inhibition at polar sites. This ensures cell division at the proper site by restricting the formation of a division septum at the midpoint of the long axis of the cell. The chain is Cell division topological specificity factor from Buchnera aphidicola subsp. Baizongia pistaciae (strain Bp).